Here is a 263-residue protein sequence, read N- to C-terminus: Polyglutamine-binding protein 1 (263 aa).

Residues 46–80 form the WW domain; sequence EGLPPSWYKVFDPSCGLPYYWNVDTDLVSWLSPHD. Phosphoserine is present on Ser94. The tract at residues 94-263 is disordered; the sequence is SSNADAEEKL…AEASRTKQQD (170 aa). Residues 99–173 show a composition bias toward basic and acidic residues; it reads AEEKLDRSHE…DKVDREESKE (75 aa). 14 tandem repeats follow at residues 104 to 110, 111 to 117, 118 to 124, 125 to 131, 132 to 138, 139 to 140, 141 to 142, 143 to 144, 150 to 151, 152 to 153, 154 to 155, 156 to 157, 158 to 159, and 160 to 161. Positions 104–138 are 5 X 7 AA approximate tandem repeats of D-R-[SG]-H-D-K-S; that stretch reads DRSHEKSDRGHEKSDRGHEKSDRSHEKSERNHEKS. The segment at 139 to 144 is 3 X 2 AA tandem repeats of [DE]-R; the sequence is DRDRER. Residues 150–161 are 6 X 2 AA tandem repeats of [DE]-R; sequence DRERERDRDRDR. The segment at 243–253 is important for interaction with TXNL4A; sequence YPSPGAVLRAN. Ser245 bears the Phosphoserine mark.

As to quaternary structure, interacts with POU3F2/Brn-2, ATXN1, TXNL4A, HTT and AR. Interaction with ATXN1 correlates positively with the length of the polyglutamine tract. Interacts with RNA polymerase II large subunit in a phosphorylation-dependent manner. Forms a ternary complex with ATXN1 mutant and phosphorylated RNA polymerase II. Interacts (via C-terminus) with TXNL4A and CD2BP2. Interacts (via WW domain) with ATN1 and SF3B1, and may interact with additional splice factors. Interacts (via WW domain) with WBP11; Leading to reduce interaction between PQBP1 and TXNL4A. Interacts with CAPRIN1. Interacts with DDX1. Interacts with SFPQ. Interacts with KHSRP.

Its subcellular location is the nucleus. It is found in the nucleus speckle. The protein resides in the cytoplasmic granule. Its function is as follows. Intrinsically disordered protein that acts as a scaffold, and which is involved in different processes, such as pre-mRNA splicing, transcription regulation, innate immunity and neuron development. Interacts with splicing-related factors via the intrinsically disordered region and regulates alternative splicing of target pre-mRNA species. May suppress the ability of POU3F2 to transactivate the DRD1 gene in a POU3F2 dependent manner. Can activate transcription directly or via association with the transcription machinery. May be involved in ATXN1 mutant-induced cell death. The interaction with ATXN1 mutant reduces levels of phosphorylated RNA polymerase II large subunit. Involved in the assembly of cytoplasmic stress granule, possibly by participating in the transport of neuronal RNA granules. Also acts as an innate immune sensor of infection by retroviruses, by detecting the presence of reverse-transcribed DNA in the cytosol. Directly binds retroviral reverse-transcribed DNA in the cytosol and interacts with CGAS, leading to activate the cGAS-STING signaling pathway, triggering type-I interferon production. In Bos taurus (Bovine), this protein is Polyglutamine-binding protein 1 (PQBP1).